The following is a 490-amino-acid chain: Xylulose kinase (490 aa).

Substrate is bound by residues H99, R170, D280, and N281. ATP-binding positions include W355, 441 to 442 (GA), and N445.

It belongs to the FGGY kinase family. Monomer.

The catalysed reaction is D-xylulose + ATP = D-xylulose 5-phosphate + ADP + H(+). Its function is as follows. Phosphorylates D-xylulose to produce D-xylulose 5-phosphate, a molecule that may play an important role in the regulation of glucose metabolism and lipogenesis. This is Xylulose kinase (XYLB) from Bos taurus (Bovine).